Here is a 263-residue protein sequence, read N- to C-terminus: Phosphoribosylaminoimidazole-succinocarboxamide synthase (263 aa).

Positions 239–263 (MNENEPPKPAGPVLVSSKPDGETRH) are disordered.

This sequence belongs to the SAICAR synthetase family.

The catalysed reaction is 5-amino-1-(5-phospho-D-ribosyl)imidazole-4-carboxylate + L-aspartate + ATP = (2S)-2-[5-amino-1-(5-phospho-beta-D-ribosyl)imidazole-4-carboxamido]succinate + ADP + phosphate + 2 H(+). It participates in purine metabolism; IMP biosynthesis via de novo pathway; 5-amino-1-(5-phospho-D-ribosyl)imidazole-4-carboxamide from 5-amino-1-(5-phospho-D-ribosyl)imidazole-4-carboxylate: step 1/2. The chain is Phosphoribosylaminoimidazole-succinocarboxamide synthase from Chelativorans sp. (strain BNC1).